Reading from the N-terminus, the 308-residue chain is Phosphoribosylaminoimidazole-succinocarboxamide synthase (308 aa).

It belongs to the SAICAR synthetase family.

The catalysed reaction is 5-amino-1-(5-phospho-D-ribosyl)imidazole-4-carboxylate + L-aspartate + ATP = (2S)-2-[5-amino-1-(5-phospho-beta-D-ribosyl)imidazole-4-carboxamido]succinate + ADP + phosphate + 2 H(+). Its pathway is purine metabolism; IMP biosynthesis via de novo pathway; 5-amino-1-(5-phospho-D-ribosyl)imidazole-4-carboxamide from 5-amino-1-(5-phospho-D-ribosyl)imidazole-4-carboxylate: step 1/2. The polypeptide is Phosphoribosylaminoimidazole-succinocarboxamide synthase (Xylella fastidiosa (strain 9a5c)).